The sequence spans 426 residues: Glutamate-1-semialdehyde 2,1-aminomutase (426 aa).

An N6-(pyridoxal phosphate)lysine modification is found at Lys265.

The protein belongs to the class-III pyridoxal-phosphate-dependent aminotransferase family. HemL subfamily. Homodimer. Pyridoxal 5'-phosphate is required as a cofactor.

It localises to the cytoplasm. It catalyses the reaction (S)-4-amino-5-oxopentanoate = 5-aminolevulinate. Its pathway is porphyrin-containing compound metabolism; protoporphyrin-IX biosynthesis; 5-aminolevulinate from L-glutamyl-tRNA(Glu): step 2/2. This Salmonella enteritidis PT4 (strain P125109) protein is Glutamate-1-semialdehyde 2,1-aminomutase.